Consider the following 179-residue polypeptide: Large ribosomal subunit protein uL6 (179 aa).

Belongs to the universal ribosomal protein uL6 family. Part of the 50S ribosomal subunit.

Its function is as follows. This protein binds to the 23S rRNA, and is important in its secondary structure. It is located near the subunit interface in the base of the L7/L12 stalk, and near the tRNA binding site of the peptidyltransferase center. This is Large ribosomal subunit protein uL6 from Treponema pallidum (strain Nichols).